A 479-amino-acid chain; its full sequence is MSPQTETKANVGFKAGVKEYKLTYYTPEYETKDTDILAAFRVTPQPGVPPEEAGAAVAAESSTGTWTTVWTDGLTSLDRYKGRCYHIEPVPGEETQFIAYVAYPLDLFEEGSVTNMFTSIVGNVFGFKALAALRLEDLRIPPAYTKTFQGPPHGIQVERDKLNKYGRPLLGCTIKPKLGLSAKNYGRAVYECLRGGLDFTKDDENVNSQPFMRWRDRFLFCAEAIYKSQAETGEIKGHYLNATAGTCEEMIKRAVFARELGVPIVMHDYLTGGFTANTSLAHYCRDNGLLLHIHRAMHAVIDRQKNHGMHFRVLAKALRLSGGDHVHAGTVVGKLEGDRESTLGFVDLLRDDYVEKDRSRGIFFTQDWVSLPGVLPVASGGIHVWHMPALTEIFGDDSVLQFGGGTLGHPWGNAPGAVANRVALEACVQARNEGRDLAIEGNTIIREACKWSPELAAACEVWKEIRFNFPTVDTLDTQE.

The propeptide occupies 1–2; that stretch reads MS. Asn123 and Thr173 together coordinate substrate. Catalysis depends on Lys175, which acts as the Proton acceptor. Lys177 contacts substrate. The Mg(2+) site is built by Lys201, Asp203, and Glu204. Lys201 is subject to N6-carboxylysine. Phosphoserine is present on Ser208. His294 functions as the Proton acceptor in the catalytic mechanism. Substrate contacts are provided by Arg295 and His327. At Thr330 the chain carries Phosphothreonine. Ser379 provides a ligand contact to substrate.

The protein belongs to the RuBisCO large chain family. Type I subfamily. As to quaternary structure, heterohexadecamer of 8 large chains and 8 small chains; disulfide-linked. The disulfide link is formed within the large subunit homodimers. Requires Mg(2+) as cofactor. In terms of processing, the disulfide bond which can form in the large chain dimeric partners within the hexadecamer appears to be associated with oxidative stress and protein turnover.

The protein resides in the plastid. Its subcellular location is the chloroplast. The enzyme catalyses 2 (2R)-3-phosphoglycerate + 2 H(+) = D-ribulose 1,5-bisphosphate + CO2 + H2O. The catalysed reaction is D-ribulose 1,5-bisphosphate + O2 = 2-phosphoglycolate + (2R)-3-phosphoglycerate + 2 H(+). Its function is as follows. RuBisCO catalyzes two reactions: the carboxylation of D-ribulose 1,5-bisphosphate, the primary event in carbon dioxide fixation, as well as the oxidative fragmentation of the pentose substrate in the photorespiration process. Both reactions occur simultaneously and in competition at the same active site. The protein is Ribulose bisphosphate carboxylase large chain of Nasturtium officinale (Watercress).